The following is a 755-amino-acid chain: Polyribonucleotide nucleotidyltransferase (755 aa).

Mg(2+)-binding residues include Asp-545 and Asp-551. A KH domain is found at 611 to 670; that stretch reads PRITAITVPVNKIGEVIGPKGKTINSITEETGANISIEEDGTVYVSAASGAAAEAAIEKI. Residues 682 to 751 enclose the S1 motif domain; it reads GERFLGTVVK…NRGKISLAPV (70 aa).

Belongs to the polyribonucleotide nucleotidyltransferase family. It depends on Mg(2+) as a cofactor.

Its subcellular location is the cytoplasm. It catalyses the reaction RNA(n+1) + phosphate = RNA(n) + a ribonucleoside 5'-diphosphate. Its function is as follows. Involved in mRNA degradation. Catalyzes the phosphorolysis of single-stranded polyribonucleotides processively in the 3'- to 5'-direction. This is Polyribonucleotide nucleotidyltransferase from Corynebacterium diphtheriae (strain ATCC 700971 / NCTC 13129 / Biotype gravis).